The chain runs to 381 residues: ELMO domain-containing protein 3 (381 aa).

The disordered stretch occupies residues M1–D31. Over residues H9 to G19 the composition is skewed to basic and acidic residues. The 155-residue stretch at V170 to P324 folds into the ELMO domain.

In terms of tissue distribution, both isoform 1 and isoform 6 are widely expressed.

It is found in the cell projection. It localises to the stereocilium. The protein resides in the kinocilium. The protein localises to the cytoplasm. Its subcellular location is the cytoskeleton. Functionally, acts as a GTPase-activating protein (GAP) for ARL2 with low specific activity. The sequence is that of ELMO domain-containing protein 3 (ELMOD3) from Homo sapiens (Human).